A 454-amino-acid chain; its full sequence is Zinc finger CCCH domain-containing protein 66 (454 aa).

Residues 1 to 23 (MAAGAGAGGGGGEGDSNGGGTSP) are compositionally biased toward gly residues. A disordered region spans residues 1 to 30 (MAAGAGAGGGGGEGDSNGGGTSPGGVSAAA). C3H1-type zinc fingers lie at residues 66 to 94 (RIGE…HPPN), 111 to 139 (RVGQ…HPRE), 157 to 185 (RPNE…HPQP), 318 to 346 (RPDQ…HPKE), and 364 to 392 (RPGE…HPMG). A disordered region spans residues 405 to 454 (DVSSMHYQLSPSPGHPGILLDGGSGRSHRVPQSDSQQIPSGDGNAEREAS). Residues 434–443 (VPQSDSQQIP) are compositionally biased toward polar residues.

This Oryza sativa subsp. japonica (Rice) protein is Zinc finger CCCH domain-containing protein 66.